Consider the following 236-residue polypeptide: Leucyl/phenylalanyl-tRNA--protein transferase (236 aa).

This sequence belongs to the L/F-transferase family.

The protein resides in the cytoplasm. It catalyses the reaction N-terminal L-lysyl-[protein] + L-leucyl-tRNA(Leu) = N-terminal L-leucyl-L-lysyl-[protein] + tRNA(Leu) + H(+). The catalysed reaction is N-terminal L-arginyl-[protein] + L-leucyl-tRNA(Leu) = N-terminal L-leucyl-L-arginyl-[protein] + tRNA(Leu) + H(+). It carries out the reaction L-phenylalanyl-tRNA(Phe) + an N-terminal L-alpha-aminoacyl-[protein] = an N-terminal L-phenylalanyl-L-alpha-aminoacyl-[protein] + tRNA(Phe). Functionally, functions in the N-end rule pathway of protein degradation where it conjugates Leu, Phe and, less efficiently, Met from aminoacyl-tRNAs to the N-termini of proteins containing an N-terminal arginine or lysine. The sequence is that of Leucyl/phenylalanyl-tRNA--protein transferase from Shewanella sediminis (strain HAW-EB3).